Here is a 77-residue protein sequence, read N- to C-terminus: Teretoxin Tsu15.4 (77 aa).

The signal sequence occupies residues Met-1–Asn-21. The propeptide occupies Ser-22 to Arg-40.

In terms of processing, contains 4 disulfide bonds. Expressed by the venom duct.

The protein resides in the secreted. The sequence is that of Teretoxin Tsu15.4 from Terebra subulata (Chocolate spotted auger).